Reading from the N-terminus, the 142-residue chain is Large ribosomal subunit protein uL13 (142 aa).

Belongs to the universal ribosomal protein uL13 family. As to quaternary structure, part of the 50S ribosomal subunit.

Functionally, this protein is one of the early assembly proteins of the 50S ribosomal subunit, although it is not seen to bind rRNA by itself. It is important during the early stages of 50S assembly. This Francisella tularensis subsp. mediasiatica (strain FSC147) protein is Large ribosomal subunit protein uL13.